Here is a 277-residue protein sequence, read N- to C-terminus: Shikimate dehydrogenase (NADP(+)) (277 aa).

Shikimate-binding positions include 14–16 and Thr-61; that span reads SKS. Lys-65 serves as the catalytic Proton acceptor. Asp-77 serves as a coordination point for NADP(+). Shikimate is bound by residues Asn-86 and Asp-102. Residues 127 to 131, 151 to 156, and Met-215 each bind NADP(+); these read GAGGA and NRTPDK. Tyr-217 contributes to the shikimate binding site. Gly-239 contributes to the NADP(+) binding site.

Belongs to the shikimate dehydrogenase family. Homodimer.

It catalyses the reaction shikimate + NADP(+) = 3-dehydroshikimate + NADPH + H(+). It functions in the pathway metabolic intermediate biosynthesis; chorismate biosynthesis; chorismate from D-erythrose 4-phosphate and phosphoenolpyruvate: step 4/7. Its function is as follows. Involved in the biosynthesis of the chorismate, which leads to the biosynthesis of aromatic amino acids. Catalyzes the reversible NADPH linked reduction of 3-dehydroshikimate (DHSA) to yield shikimate (SA). In Nitrosomonas eutropha (strain DSM 101675 / C91 / Nm57), this protein is Shikimate dehydrogenase (NADP(+)).